The chain runs to 77 residues: Exodeoxyribonuclease 7 small subunit (77 aa).

Belongs to the XseB family. In terms of assembly, heterooligomer composed of large and small subunits.

It localises to the cytoplasm. The enzyme catalyses Exonucleolytic cleavage in either 5'- to 3'- or 3'- to 5'-direction to yield nucleoside 5'-phosphates.. Bidirectionally degrades single-stranded DNA into large acid-insoluble oligonucleotides, which are then degraded further into small acid-soluble oligonucleotides. The sequence is that of Exodeoxyribonuclease 7 small subunit from Chromobacterium violaceum (strain ATCC 12472 / DSM 30191 / JCM 1249 / CCUG 213 / NBRC 12614 / NCIMB 9131 / NCTC 9757 / MK).